The primary structure comprises 1149 residues: Potassium channel subfamily U member 1 (1149 aa).

Over 1-24 (MFQTKLRNESWEDLQKMSCTTEIQ) the chain is Extracellular. The chain crosses the membrane as a helical span at residues 25–45 (VAFILSSFMTFISGLIILLIF). At 46–101 (RLIWRTVKKWQIIKGTGIILELFTSGSIRRNHVRSLHFHGRFRDRIEMLLSAQTFV) the chain is on the cytoplasmic side. The helical transmembrane segment at 102–122 (GQVLVILVFVLSIGSLIIYFI) threads the bilayer. The Extracellular segment spans residues 123 to 138 (NSADPVGSCSSYEDKT). A helical transmembrane segment spans residues 139–159 (IPVDLVFNAFFSFYFGLRFMA). At 160 to 163 (ADDK) the chain is on the cytoplasmic side. A helical transmembrane segment spans residues 164–184 (IKFWLEMNSIVDIFTIPPTFI). Residues 185-188 (SYYL) are Extracellular-facing. A helical; Voltage-sensor transmembrane segment spans residues 189–209 (KSNWLGLRFLRALRLLELPRI). Residues 210–226 (LQILRAIKTSNSVKFSK) lie on the Cytoplasmic side of the membrane. The helical transmembrane segment at 227–247 (LLSIVLSTWFTAAGFIHLVEN) threads the bilayer. Residues 248–259 (SGDPWLKGRNSQ) lie on the Extracellular side of the membrane. Residues 260-282 (NISYFDSVYLVMATTSTVGFGDV) constitute an intramembrane region (pore-forming). Residues 276-279 (TVGF) carry the Selectivity for potassium motif. Residues 283–291 (VAKTSLGRT) lie on the Extracellular side of the membrane. A helical transmembrane segment spans residues 292-312 (FIIFFTLGSLILFANYIPEMV). Residues 313–1149 (ELFANKRKYT…EDPFAYSEPL (837 aa)) lie on the Cytoplasmic side of the membrane. RCK N-terminal domains lie at 331 to 473 (KKFI…DNII) and 713 to 884 (RNHI…EGSL). Low complexity predominate over residues 829-845 (IDSSSDSSPSVSEETAS). Disordered regions lie at residues 829–851 (IDSSSDSSPSVSEETASCTNGHN) and 1106–1149 (ARNQ…SEPL). Residues 1106–1120 (ARNQIRTNSSITSQK) are compositionally biased toward polar residues.

The protein belongs to the potassium channel family. Calcium-activated (TC 1.A.1.3) subfamily. KCa5.1/KCNU1 sub-subfamily. Homotetramer; which constitutes the calcium-activated potassium channel. Interacts with LRRC52; this interaction changes some channel gating properties, such as shifting gating to more negative potentials at a given pH. In terms of tissue distribution, testis-specific.

The protein localises to the cell membrane. It localises to the cell projection. It is found in the cilium. The protein resides in the flagellum membrane. The enzyme catalyses K(+)(in) = K(+)(out). Regulated by changes in cytosolic pH; activated by alkalization. VU0546110 acts as a selective inhibitor. The auxiliary subunit LRRC52 shifts the activation of KCNU1 to more negative potentials at a given pH. Functionally, testis-specific potassium channel activated by both intracellular pH and membrane voltage that mediates export of K(+). Represents the primary spermatozoan K(+) current. The channel underlies a pH-triggered membrane hyperpolarization during the process of sperm capacitation, as sperm encounter the alkaline environment near the ovum in the female reproductive tract, thereby playing an essential for male fertility. This chain is Potassium channel subfamily U member 1 (KCNU1), found in Macaca fascicularis (Crab-eating macaque).